Here is a 597-residue protein sequence, read N- to C-terminus: Gamma-terpinene synthase, chloroplastic (597 aa).

A chloroplast-targeting transit peptide spans 1–47 (MATLSMQVSILSKQVKNLNSFGMRASKLPMVARRVDVSTTRLRPICS). Positions 350 and 354 each coordinate Mn(2+). Residues 350–354 (DDVYD) carry the DDXXD motif motif. Homodimerization regions lie at residues 356 to 362 (YGTLDEL) and 428 to 465 (EAKWYYAGYTPTLAEYLENAKVSISSPTIISQVYFTLP). Positions 494 and 502 each coordinate Mn(2+).

It belongs to the terpene synthase family. As to quaternary structure, homodimer. Mn(2+) serves as cofactor. Mg(2+) is required as a cofactor.

It localises to the plastid. The protein localises to the chloroplast. It carries out the reaction (2E)-geranyl diphosphate = gamma-terpinene + diphosphate. The protein operates within secondary metabolite biosynthesis; terpenoid biosynthesis. Its function is as follows. Involved in the biosynthesis of phenolic monoterpenes natural products thymol and carvacrol which have a broad range of biological activities acting as antimicrobial compounds, insecticides, antioxidants and pharmaceutical agents. Monoterpene synthase which catalyzes the conversion of geranyl diphosphate (GPP) to gamma-terpinene and minor amounts of other monoterpenes (e.g. alpha-thujene, alpha-terpinene, myrcene, sabinene, (+)-R-limonene, alpha-pinene and alpha-phellandrene). The sequence is that of Gamma-terpinene synthase, chloroplastic from Thymus caespititius (Cretan thyme).